Consider the following 450-residue polypeptide: Flavin-containing monooxygenase FMO GS-OX-like 5 (450 aa).

17–22 (GAGPAG) contributes to the FAD binding site. 215-220 (GNSSSA) serves as a coordination point for NADP(+).

It belongs to the FMO family. Requires FAD as cofactor.

In terms of biological role, catalyzes the conversion of methylthioalkyl glucosinolates of any chain length into methylsulfinylalkyl glucosinolates. This chain is Flavin-containing monooxygenase FMO GS-OX-like 5, found in Arabidopsis thaliana (Mouse-ear cress).